A 276-amino-acid polypeptide reads, in one-letter code: Halorhodopsin (276 aa).

Positions 1-21 (MTAASTTATTMLQATQSDVLQ) are excised as a propeptide. Residues 22–25 (EIQS) lie on the Extracellular side of the membrane. Residues 26-51 (NFLLNSSIWVNIALAGVVILLFVAMG) traverse the membrane as a helical segment. The Cytoplasmic segment spans residues 52 to 57 (RDIESP). Residues 58-81 (RAKLIWVATMLVPLVSISSYAGLA) form a helical membrane-spanning segment. At 82–105 (SGLTVGFLQMPPGHALAGQEVLSP) the chain is on the extracellular side. The helical transmembrane segment at 106–127 (WGRYLTWTFSTPMILLALGLLA) threads the bilayer. Over 128–130 (DTD) the chain is Cytoplasmic. A helical membrane pass occupies residues 131–154 (IASLFTAITMDIGMCVTGLAAALI). The Extracellular portion of the chain corresponds to 155 to 157 (TSS). A helical membrane pass occupies residues 158 to 180 (HLLRWVFYGISCAFFVAVLYVLL). Topologically, residues 181–192 (VQWPADAEAAGT) are cytoplasmic. A helical transmembrane segment spans residues 193–216 (SEIFGTLKILTVVLWLGYPILWAL). Residues 217–225 (GSEGVALLS) are Extracellular-facing. The chain crosses the membrane as a helical span at residues 226-254 (VGVTSWGYSGLDILAKYVFAFLLLRWVAA). At Lys241 the chain carries N6-(retinylidene)lysine. Over 255-276 (NEGAVSGSGMSIGSGGAAPADD) the chain is Cytoplasmic.

It belongs to the archaeal/bacterial/fungal opsin family.

It is found in the cell membrane. Light-driven chloride pump. The polypeptide is Halorhodopsin (hop) (Halobacterium halobium (strain port)).